The primary structure comprises 983 residues: GPI ethanolamine phosphate transferase 2, catalytic subunit (983 aa).

The Lumenal segment spans residues 1–431 (MRLGSGTFAT…SLSAQVAQYD (431 aa)). N-linked (GlcNAc...) asparagine glycosylation occurs at asparagine 194. The next 12 helical transmembrane spans lie at 432 to 452 (IYSM…LLLS), 471 to 491 (GFSL…VIVC), 506 to 526 (LAAG…VSVL), 552 to 572 (LLIL…SFVE), 699 to 719 (VLAA…CSPV), 721 to 741 (KAAL…IGSV), 752 to 772 (ISKG…ILFT), 789 to 809 (LKTV…ALLF), 812 to 832 (HNLP…KFIW), 879 to 899 (VEIP…VLWA), 919 to 939 (ACFC…VLVT), and 955 to 975 (LLYE…FTAM).

This sequence belongs to the PIGG/PIGN/PIGO family. PIGG subfamily. Part of the ethanolamine phosphate transferase 2 complex composed by PIGG and PIGF. PIGF is required to stabilize it. Competes with PIGO for the binding of PIGF.

It localises to the endoplasmic reticulum membrane. It participates in glycolipid biosynthesis; glycosylphosphatidylinositol-anchor biosynthesis. In terms of biological role, catalytic subunit of the ethanolamine phosphate transferase 2 complex that transfers an ethanolamine phosphate (EtNP) from a phosphatidylethanolamine (PE) to the 6-OH position of the second alpha-1,6-linked mannose of a 6-PEtn-alpha-D-Man-(1-&gt;2)-alpha-D-Man-(1-&gt;6)-2-PEtn-alpha-D-Man-(1-&gt;4)-alpha-D-GlcN-(1-&gt;6)-(1-radyl,2-acyl-sn-glycero-3-phospho)-2-acyl-inositol (also termed H7) intermediate to generate a 6-PEtn-alpha-D-Man-(1-&gt;2)-6-PEtn-alpha-D-Man-(1-&gt;6)-2-PEtn-alpha-D-Man-(1-&gt;4)-alpha-D-GlcN-(1-&gt;6)-(1-radyl,2-acyl-sn-glycero-3-phospho)-2-acyl-inositol (also termed H8) and participates in the eleventh step of the glycosylphosphatidylinositol-anchor biosynthesis. The sequence is that of GPI ethanolamine phosphate transferase 2, catalytic subunit from Homo sapiens (Human).